Reading from the N-terminus, the 152-residue chain is Protein-export protein SecB (152 aa).

This sequence belongs to the SecB family. In terms of assembly, homotetramer, a dimer of dimers. One homotetramer interacts with 1 SecA dimer.

It localises to the cytoplasm. Its function is as follows. One of the proteins required for the normal export of preproteins out of the cell cytoplasm. It is a molecular chaperone that binds to a subset of precursor proteins, maintaining them in a translocation-competent state. It also specifically binds to its receptor SecA. The polypeptide is Protein-export protein SecB (Rickettsia felis (strain ATCC VR-1525 / URRWXCal2) (Rickettsia azadi)).